We begin with the raw amino-acid sequence, 751 residues long: Catalase-peroxidase (751 aa).

Positions 92–240 (WHSAGTYRVT…VAAAHMGLIY (149 aa)) form a cross-link, tryptophyl-tyrosyl-methioninium (Trp-Tyr) (with M-266). H93 serves as the catalytic Proton acceptor. The segment at residues 240–266 (YVNPEGPDGVPDPIAAARDIRTTFHRM) is a cross-link (tryptophyl-tyrosyl-methioninium (Tyr-Met) (with W-92)). Residue H281 participates in heme b binding.

The protein belongs to the peroxidase family. Peroxidase/catalase subfamily. Homodimer or homotetramer. The cofactor is heme b. Formation of the three residue Trp-Tyr-Met cross-link is important for the catalase, but not the peroxidase activity of the enzyme.

The protein resides in the cytoplasm. The enzyme catalyses H2O2 + AH2 = A + 2 H2O. The catalysed reaction is 2 H2O2 = O2 + 2 H2O. Bifunctional enzyme with both catalase and broad-spectrum peroxidase activity. The sequence is that of Catalase-peroxidase from Phaeosphaeria nodorum (strain SN15 / ATCC MYA-4574 / FGSC 10173) (Glume blotch fungus).